The chain runs to 274 residues: Ethanolamine ammonia-lyase small subunit (274 aa).

The adenosylcob(III)alamin site is built by V161, E182, and C211.

The protein belongs to the EutC family. As to quaternary structure, the basic unit is a heterodimer which dimerizes to form tetramers. The heterotetramers trimerize; 6 large subunits form a core ring with 6 small subunits projecting outwards. The cofactor is adenosylcob(III)alamin.

Its subcellular location is the bacterial microcompartment. It catalyses the reaction ethanolamine = acetaldehyde + NH4(+). The protein operates within amine and polyamine degradation; ethanolamine degradation. In terms of biological role, catalyzes the deamination of various vicinal amino-alcohols to oxo compounds. Allows this organism to utilize ethanolamine as the sole source of nitrogen and carbon in the presence of external vitamin B12. This is Ethanolamine ammonia-lyase small subunit from Pseudomonas fluorescens (strain ATCC BAA-477 / NRRL B-23932 / Pf-5).